Consider the following 127-residue polypeptide: Large ribosomal subunit protein bL19 (127 aa).

Belongs to the bacterial ribosomal protein bL19 family.

This protein is located at the 30S-50S ribosomal subunit interface and may play a role in the structure and function of the aminoacyl-tRNA binding site. The chain is Large ribosomal subunit protein bL19 from Cupriavidus pinatubonensis (strain JMP 134 / LMG 1197) (Cupriavidus necator (strain JMP 134)).